Reading from the N-terminus, the 37-residue chain is Large ribosomal subunit protein bL36 (37 aa).

This sequence belongs to the bacterial ribosomal protein bL36 family.

The chain is Large ribosomal subunit protein bL36 from Francisella tularensis subsp. tularensis (strain FSC 198).